Here is a 162-residue protein sequence, read N- to C-terminus: Ribonuclease H (162 aa).

Residues 6–154 enclose the RNase H type-1 domain; it reads DMKRVEIFTD…ADRLANQGVE (149 aa). Mg(2+)-binding residues include Asp15, Glu53, Asp82, and Asp146.

This sequence belongs to the RNase H family. Monomer. Requires Mg(2+) as cofactor.

The protein localises to the cytoplasm. The enzyme catalyses Endonucleolytic cleavage to 5'-phosphomonoester.. Functionally, endonuclease that specifically degrades the RNA of RNA-DNA hybrids. This chain is Ribonuclease H, found in Nitrosomonas eutropha (strain DSM 101675 / C91 / Nm57).